We begin with the raw amino-acid sequence, 529 residues long: Mitochondrial inner membrane magnesium transporter MIT1 (529 aa).

2 coiled-coil regions span residues 336-388 (KIQL…LKNE) and 416-450 (LLETHLQLTDELSGELENMEEKITHYEELMRLNLD). Residues 456–476 (FILLNAKISFSTLFCSICAVI) form a helical membrane-spanning segment. At 477–492 (TSLFGMNLKNFIEHND) the chain is on the mitochondrial intermembrane side. The helical transmembrane segment at 493-513 (YAFFIVSIFITSWSIVGIYFT) threads the bilayer. Topologically, residues 514–529 (KNINTLLRFFDKYNVK) are mitochondrial matrix.

Belongs to the CorA metal ion transporter (MIT) (TC 1.A.35) family.

It localises to the mitochondrion inner membrane. In terms of biological role, mitochondrial inner membrane magnesium transporter required for mitochondrial magnesium homeostasis. Involved in the development of the sporozoite in the mosquito vector midgut. The protein is Mitochondrial inner membrane magnesium transporter MIT1 of Plasmodium falciparum (isolate 3D7).